We begin with the raw amino-acid sequence, 201 residues long: Probable chemoreceptor glutamine deamidase CheD 1 (201 aa).

This sequence belongs to the CheD family.

It carries out the reaction L-glutaminyl-[protein] + H2O = L-glutamyl-[protein] + NH4(+). Functionally, probably deamidates glutamine residues to glutamate on methyl-accepting chemotaxis receptors (MCPs), playing an important role in chemotaxis. The polypeptide is Probable chemoreceptor glutamine deamidase CheD 1 (Geobacter sulfurreducens (strain ATCC 51573 / DSM 12127 / PCA)).